A 255-amino-acid chain; its full sequence is 5'-nucleotidase SurE (255 aa).

Positions 8, 9, 40, and 93 each coordinate a divalent metal cation.

This sequence belongs to the SurE nucleotidase family. It depends on a divalent metal cation as a cofactor.

It localises to the cytoplasm. It catalyses the reaction a ribonucleoside 5'-phosphate + H2O = a ribonucleoside + phosphate. In terms of biological role, nucleotidase that shows phosphatase activity on nucleoside 5'-monophosphates. The protein is 5'-nucleotidase SurE of Nitrobacter hamburgensis (strain DSM 10229 / NCIMB 13809 / X14).